A 336-amino-acid chain; its full sequence is Ribosomal RNA large subunit methyltransferase F (336 aa).

The span at 212-231 (HHLERSRGKPTGKGVRRVRS) shows a compositional bias: basic residues. A disordered region spans residues 212-234 (HHLERSRGKPTGKGVRRVRSGRM).

The protein belongs to the methyltransferase superfamily. METTL16/RlmF family.

The protein resides in the cytoplasm. It catalyses the reaction adenosine(1618) in 23S rRNA + S-adenosyl-L-methionine = N(6)-methyladenosine(1618) in 23S rRNA + S-adenosyl-L-homocysteine + H(+). Functionally, specifically methylates the adenine in position 1618 of 23S rRNA. This Methylobacillus flagellatus (strain ATCC 51484 / DSM 6875 / VKM B-1610 / KT) protein is Ribosomal RNA large subunit methyltransferase F.